The chain runs to 92 residues: Small ribosomal subunit protein uS19c (92 aa).

The protein belongs to the universal ribosomal protein uS19 family.

It is found in the plastid. The protein resides in the chloroplast. Protein S19 forms a complex with S13 that binds strongly to the 16S ribosomal RNA. In Trieres chinensis (Marine centric diatom), this protein is Small ribosomal subunit protein uS19c (rps19).